The sequence spans 258 residues: Type II restriction enzyme HindII (258 aa).

It carries out the reaction Endonucleolytic cleavage of DNA to give specific double-stranded fragments with terminal 5'-phosphates.. Functionally, a P subtype restriction enzyme that recognizes the double-stranded sequence 5'-GTYRAC-3' and cleaves after Y-3. This Haemophilus influenzae (strain ATCC 51907 / DSM 11121 / KW20 / Rd) protein is Type II restriction enzyme HindII (hindIIR).